We begin with the raw amino-acid sequence, 146 residues long: Ankyrin repeat-containing protein P16F5.05c (146 aa).

ANK repeat units follow at residues 1–31 (MDVD…ELSR), 35–64 (NGNS…KEVI), 70–99 (SGNT…DPHI), and 103–132 (YEKS…AKGS).

Its subcellular location is the cytoplasm. It localises to the nucleus. The polypeptide is Ankyrin repeat-containing protein P16F5.05c (Schizosaccharomyces pombe (strain 972 / ATCC 24843) (Fission yeast)).